A 1493-amino-acid polypeptide reads, in one-letter code: Protein RNA-directed DNA methylation 3 (1493 aa).

Disordered stretches follow at residues 1–34 and 54–96; these read MDRK…EGLR and GYYG…SSFV. Residues 21 to 28 carry the Nuclear localization signal motif; sequence KRKNSVEF. Positions 24 to 34 are enriched in basic and acidic residues; that stretch reads NSVEFRDEGLR. Residues 60–80 show a composition bias toward acidic residues; sequence SDEDDDGLGFLNDMEDEPEVE. The segment covering 81-92 has biased composition (basic and acidic residues); that stretch reads ESSKAGKGEKGK. In terms of domain architecture, KOW 1 spans 239–266; that stretch reads KVSEGTWARVKNGKYKGDLAQIVAVSDT. The tract at residues 393–432 is disordered; that stretch reads PTCREGGKGEGSGGGKGEGSGGGKGEGSRGGKGEGSSDFK. Residues 401–417 show a composition bias toward gly residues; it reads GEGSGGGKGEGSGGGKG. A compositionally biased stretch (basic and acidic residues) spans 418–432; sequence EGSRGGKGEGSSDFK. The region spanning 501–528 is the KOW 2 domain; that stretch reads QISVNDVVKISKGPSEGKQGVVRQVYRG. The interval 578 to 602 is disordered; the sequence is SSPKSPLSPEKEWQPRERYNSSNQG. The span at 586–596 shows a compositional bias: basic and acidic residues; the sequence is PEKEWQPRERY. Positions 607 to 634 constitute a KOW 3 domain; that stretch reads TYSIGQKLRIRVGPLKGYLCRVIALRYS. Disordered stretches follow at residues 692–711, 728–747, and 757–1493; these read IGAG…PSTD, EKNP…TVAD, and AAEN…KTGW. The stretch at 732–741 is repeat 1; it reads WGGSKPTSDV. Residues 732 to 1493 form a 42 X 9 AA approximate WG/GW-rich tandem repeats region; it reads WGGSKPTSDV…WGTGDKKTGW (762 aa). A compositionally biased stretch (low complexity) spans 757–767; it reads AAENKPASASD. 37 consecutive repeat copies span residues 775–784, 789–797, 818–827, 836–845, 854–863, 866–875, 883–892, 917–926, 935–943, 944–953, 954–962, 963–972, 978–987, 1003–1012, 1013–1022, 1023–1032, 1033–1042, 1043–1052, 1053–1062, 1063–1072, 1073–1082, 1132–1141, 1144–1153, 1156–1165, 1167–1176, 1180–1189, 1192–1201, 1204–1213, 1217–1226, 1229–1238, 1241–1250, 1253–1262, 1266–1275, 1278–1287, 1290–1299, 1302–1311, and 1314–1323. Positions 790-812 are enriched in polar residues; it reads GDTSASNVEASSWEKQGASTSNV. Residues 846-860 show a composition bias toward basic and acidic residues; it reads SQKKEESSWGKKGGS. Residues 866–875 show a composition bias toward polar residues; the sequence is WGNKDGNSSA. A compositionally biased stretch (basic and acidic residues) spans 955–1090; sequence GKKDDGGSWG…YSEQTFDRGG (136 aa). The segment covering 1122–1134 has biased composition (low complexity); the sequence is PWSKPSGGSSWGK. The span at 1156 to 1172 shows a compositional bias: polar residues; it reads WGKQDNGVGSSWGKQND. Residues 1186-1213 are compositionally biased toward gly residues; it reads AGGGSSWGKQDSGGDGSSWGKQDGGGDS. Over residues 1218–1231 the composition is skewed to polar residues; that stretch reads GKQNNTSGGSSWGK. Gly residues predominate over residues 1235–1264; that stretch reads AGGGSSWGKQDGGGGGSSWGKQDGGGGSGS. Polar residues predominate over residues 1270–1283; it reads NETSNGSSWGKQND. Gly residues predominate over residues 1284 to 1321; the sequence is SGGGSSWGKQDGGGGGSSWGKQNDGGGGSSWGKQGDGG. Polar residues-rich tracts occupy residues 1366 to 1382 and 1392 to 1401; these read WKTD…QSGG and DSNNSKPSGS. Repeat 39 spans residues 1389-1398; sequence WGEDSNNSKP. Basic and acidic residues predominate over residues 1416 to 1430; it reads NSKKETNDKPGDDSK. Positions 1432-1442 are enriched in polar residues; sequence AWGTSNDQVNT. 3 repeat units span residues 1433-1442, 1467-1475, and 1484-1493.

As to quaternary structure, interacts with AGO4 via its C-terminal region and with RNA transcripts. Binds chromatin at loci subject to transcriptional silencing downstream of RNA Polymerase V, but independently from the presence of 24-nt siRNA.

The protein localises to the nucleus. It is found in the nucleoplasm. In terms of biological role, effector of RNA-directed DNA methylation (RdDM) triggered by small interfering RNAs (siRNAs, 24-nt RNAs). Functions as an adapter protein that binds scaffold transcripts generated by polymerase V and recruits AGO4 and AGO4-bound siRNAs to form an RdDM effector complex. Promotes the expression of 24-nt RNAs. Required for the initial establishment of DNA methylation. Together with AGO4, required for transcriptional gene silencing (TGS) by DNA methylation and repressive histone modifications (H3K9me2) of several chromatin loci. The polypeptide is Protein RNA-directed DNA methylation 3 (Arabidopsis thaliana (Mouse-ear cress)).